We begin with the raw amino-acid sequence, 550 residues long: Lariat debranching enzyme (550 aa).

Residues Cys8 and His10 each contribute to the a divalent metal cation site. Residue Ser28 is modified to Phosphoserine. Residues Asp39 and Asn84 each contribute to the a divalent metal cation site. Residues 124-154 are lariat recognition loop; sequence SGIFKSHDYRKGHFECPPYNSSTIRSIYHVR. Lys128 carries the N6-acetyllysine modification. Positions 174, 226, and 228 each coordinate a divalent metal cation. A disordered region spans residues 390–550; sequence EHHQCGEYEQ…AVDDGDASAE (161 aa). A compositionally biased stretch (polar residues) spans 416–426; sequence NTDTSALSSIN. A compositionally biased stretch (acidic residues) spans 430–445; the sequence is IMLDEEEEEEEEEEEA. Residues 450-483 show a composition bias toward polar residues; that stretch reads SDMNTPSVEPASDQASDLSTSFSDIRNLPSSMFV. Residues Ser470, Ser480, Ser484, Ser485, Ser489, Ser491, Ser494, Ser505, and Ser520 each carry the phosphoserine modification. Basic and acidic residues predominate over residues 498–528; sequence KCGETVESGDEKDLAKFPLKRLSDEHEPEQR.

It belongs to the lariat debranching enzyme family. It depends on Fe(2+) as a cofactor. Zn(2+) is required as a cofactor. Mn(2+) serves as cofactor.

It is found in the nucleus. Active in presence of diverse metals including Fe(2+), Zn(2+), Mn(2+). Also activated by Ca(2+). Binds two metal cations in two adjacent alpha and beta metal-binding pockets. Functionally, cleaves the 2'-5' phosphodiester linkage at the branch point of excised lariat intron RNA and converts them into linear molecules that can be subsequently degraded, thereby facilitating ribonucleotide turnover. Linked to its role in pre-mRNA processing mechanism, may also participate in retrovirus replication and have an antiviral cell-intrinsic defense function. This Mus musculus (Mouse) protein is Lariat debranching enzyme (Dbr1).